A 125-amino-acid chain; its full sequence is Small ribosomal subunit protein uS13 (125 aa).

It belongs to the universal ribosomal protein uS13 family. Part of the 30S ribosomal subunit. Forms a loose heterodimer with protein S19. Forms two bridges to the 50S subunit in the 70S ribosome.

Functionally, located at the top of the head of the 30S subunit, it contacts several helices of the 16S rRNA. In the 70S ribosome it contacts the 23S rRNA (bridge B1a) and protein L5 of the 50S subunit (bridge B1b), connecting the 2 subunits; these bridges are implicated in subunit movement. Contacts the tRNAs in the A and P-sites. In Rickettsia bellii (strain OSU 85-389), this protein is Small ribosomal subunit protein uS13.